The following is a 444-amino-acid chain: Putative methylesterase 13, chloroplastic (444 aa).

3 disordered regions span residues 1–32, 49–90, and 124–176; these read MGNS…KYKY, PSLS…KDSH, and SVVY…QLVD. The transit peptide at 1-60 directs the protein to the chloroplast; the sequence is MGNSFTCISHEQEQRPKKSSGGGGNNSGKYKYVRRLSLMPSFRRRTLLPSLSCSGSSSTS. Low complexity predominate over residues 49 to 64; the sequence is PSLSCSGSSSTSSSKK. The span at 65–82 shows a compositional bias: basic residues; the sequence is GGIKAKTKKIRERHHHHH. Over residues 124-148 the composition is skewed to polar residues; that stretch reads SVVYPSAQPSGTSSGPVSAVQTPKK. The span at 149–164 shows a compositional bias: low complexity; the sequence is SSAGFVRSSSSRQRSS. Residues 190 to 310 form the AB hydrolase-1 domain; the sequence is FVLVHGGGFG…LFNQQLGSND (121 aa). Catalysis depends on D264, which acts as the Acyl-ester intermediate. Catalysis depends on charge relay system residues D390 and H418.

The protein belongs to the AB hydrolase superfamily. Methylesterase family.

The protein localises to the plastid. Its subcellular location is the chloroplast. In terms of biological role, putative methylesterase. This Arabidopsis thaliana (Mouse-ear cress) protein is Putative methylesterase 13, chloroplastic.